The sequence spans 529 residues: Peptide chain release factor 3 (529 aa).

Residues 11 to 280 (AKRRTFAIIS…GLVEWAPAPM (270 aa)) enclose the tr-type G domain. GTP is bound by residues 20–27 (SHPDAGKT), 88–92 (DTPGH), and 142–145 (NKLD).

Belongs to the TRAFAC class translation factor GTPase superfamily. Classic translation factor GTPase family. PrfC subfamily.

The protein localises to the cytoplasm. Increases the formation of ribosomal termination complexes and stimulates activities of RF-1 and RF-2. It binds guanine nucleotides and has strong preference for UGA stop codons. It may interact directly with the ribosome. The stimulation of RF-1 and RF-2 is significantly reduced by GTP and GDP, but not by GMP. The polypeptide is Peptide chain release factor 3 (Salmonella arizonae (strain ATCC BAA-731 / CDC346-86 / RSK2980)).